We begin with the raw amino-acid sequence, 339 residues long: Phenylalanine--tRNA ligase alpha subunit (339 aa).

A Mg(2+)-binding site is contributed by Glu250.

This sequence belongs to the class-II aminoacyl-tRNA synthetase family. Phe-tRNA synthetase alpha subunit type 1 subfamily. As to quaternary structure, tetramer of two alpha and two beta subunits. Mg(2+) serves as cofactor.

It localises to the cytoplasm. It carries out the reaction tRNA(Phe) + L-phenylalanine + ATP = L-phenylalanyl-tRNA(Phe) + AMP + diphosphate + H(+). The chain is Phenylalanine--tRNA ligase alpha subunit from Bacteroides thetaiotaomicron (strain ATCC 29148 / DSM 2079 / JCM 5827 / CCUG 10774 / NCTC 10582 / VPI-5482 / E50).